Here is a 154-residue protein sequence, read N- to C-terminus: Small ribosomal subunit protein bS6 (154 aa).

Residues 97–154 are disordered; sequence DSEPSAMMQKRDRDDRKDRERGRRRDDEGFGGGGGFGGDRGDRGDRGDRGERSFGGEG. Basic and acidic residues-rich tracts occupy residues 105 to 124 and 135 to 154; these read QKRD…RDDE and DRGD…GGEG.

It belongs to the bacterial ribosomal protein bS6 family.

In terms of biological role, binds together with bS18 to 16S ribosomal RNA. This Methylobacterium radiotolerans (strain ATCC 27329 / DSM 1819 / JCM 2831 / NBRC 15690 / NCIMB 10815 / 0-1) protein is Small ribosomal subunit protein bS6.